The primary structure comprises 444 residues: Xylose isomerase (444 aa).

Aspartate 307 and aspartate 309 together coordinate Mg(2+).

It belongs to the xylose isomerase family. In terms of assembly, homotetramer. It depends on Mg(2+) as a cofactor.

The protein resides in the cytoplasm. It carries out the reaction alpha-D-xylose = alpha-D-xylulofuranose. In Thermotoga neapolitana (strain ATCC 49049 / DSM 4359 / NBRC 107923 / NS-E), this protein is Xylose isomerase.